Consider the following 106-residue polypeptide: Iron-sulfur cluster assembly protein CyaY (106 aa).

This sequence belongs to the frataxin family.

In terms of biological role, involved in iron-sulfur (Fe-S) cluster assembly. May act as a regulator of Fe-S biogenesis. The chain is Iron-sulfur cluster assembly protein CyaY from Yersinia pestis bv. Antiqua (strain Antiqua).